The chain runs to 407 residues: 1-deoxy-D-xylulose 5-phosphate reductoisomerase (407 aa).

The NADPH site is built by Thr-25, Gly-26, Ser-27, Ile-28, Asn-53, and Asn-136. Position 137 (Lys-137) interacts with 1-deoxy-D-xylulose 5-phosphate. Glu-138 contributes to the NADPH binding site. Asp-162 is a Mn(2+) binding site. 4 residues coordinate 1-deoxy-D-xylulose 5-phosphate: Ser-163, Glu-164, Ser-188, and His-211. Glu-164 lines the Mn(2+) pocket. Position 217 (Gly-217) interacts with NADPH. 4 residues coordinate 1-deoxy-D-xylulose 5-phosphate: Ser-224, Asn-229, Lys-230, and Glu-233. Glu-233 lines the Mn(2+) pocket.

Belongs to the DXR family. Mg(2+) is required as a cofactor. Mn(2+) serves as cofactor.

The catalysed reaction is 2-C-methyl-D-erythritol 4-phosphate + NADP(+) = 1-deoxy-D-xylulose 5-phosphate + NADPH + H(+). It participates in isoprenoid biosynthesis; isopentenyl diphosphate biosynthesis via DXP pathway; isopentenyl diphosphate from 1-deoxy-D-xylulose 5-phosphate: step 1/6. Catalyzes the NADPH-dependent rearrangement and reduction of 1-deoxy-D-xylulose-5-phosphate (DXP) to 2-C-methyl-D-erythritol 4-phosphate (MEP). In Afipia carboxidovorans (strain ATCC 49405 / DSM 1227 / KCTC 32145 / OM5) (Oligotropha carboxidovorans), this protein is 1-deoxy-D-xylulose 5-phosphate reductoisomerase.